A 408-amino-acid chain; its full sequence is Histidine--tRNA ligase (408 aa).

Belongs to the class-II aminoacyl-tRNA synthetase family.

The protein resides in the cytoplasm. The catalysed reaction is tRNA(His) + L-histidine + ATP = L-histidyl-tRNA(His) + AMP + diphosphate + H(+). The sequence is that of Histidine--tRNA ligase from Methanospirillum hungatei JF-1 (strain ATCC 27890 / DSM 864 / NBRC 100397 / JF-1).